Reading from the N-terminus, the 553-residue chain is Tether containing UBX domain for GLUT4 (553 aa).

Ala-2 bears the N-acetylalanine mark. The segment covering 182-202 (PGSLGSSASAGQAAASAPLPL) has biased composition (low complexity). The disordered stretch occupies residues 182–324 (PGSLGSSASA…REPVDREPVV (143 aa)). Ser-184 bears the Phosphoserine mark. Positions 206–217 (ELSRGDLSRPED) are enriched in basic and acidic residues. A compositionally biased stretch (low complexity) spans 260 to 280 (RPLTSSSAKLPKSLSSPGGPS). Position 275 is a phosphoserine (Ser-275). The segment covering 296-324 (EQERERDPQQEQERERPVDREPVDREPVV) has biased composition (basic and acidic residues). The tract at residues 317 to 380 (PVDREPVVCH…LVTKAFREAQ (64 aa)) is interaction with GLUT4. The UBX domain maps to 386–462 (ERYPKVALRV…NLFPAALVHL (77 aa)). The tract at residues 499 to 536 (GSPSPLPAPDPAPKSEPAAEEGALVPPEPIPGTAQPVK) is disordered. 2 positions are modified to phosphoserine: Ser-500 and Ser-502. A compositionally biased stretch (pro residues) spans 502 to 512 (SPLPAPDPAPK).

Interacts with GLUT4. Interacts with VCPKMT. Interacts with VCP. In terms of tissue distribution, ubiquitous. Highly expressed in testis, heart, skeletal muscle and pancreas.

It localises to the endomembrane system. It is found in the endoplasmic reticulum-Golgi intermediate compartment membrane. The protein resides in the cytoplasm. The protein localises to the nucleus. Functionally, tethering protein that sequesters GLUT4-containing vesicles in the cytoplasm in the absence of insulin. Modulates the amount of GLUT4 that is available at the cell surface. Enhances VCP methylation catalyzed by VCPKMT. The chain is Tether containing UBX domain for GLUT4 (ASPSCR1) from Homo sapiens (Human).